The following is a 232-amino-acid chain: Protein FAM246A (232 aa).

Disordered regions lie at residues 1-47 (MATP…RAPG), 153-178 (LPPP…RGPT), and 191-232 (AASR…GGGD). Over residues 19–31 (EVLRRVTGRRRDP) the composition is skewed to basic and acidic residues. Residues 211–220 (APVRKNHKKM) are compositionally biased toward basic residues.

This sequence belongs to the FAM246 family.

This Homo sapiens (Human) protein is Protein FAM246A.